The primary structure comprises 390 residues: Protein snail (390 aa).

The segment at 1–20 (MAANYKSCPLKKRPIVFVEE) is SNAG domain. Disordered stretches follow at residues 29–65 (ALTK…PKRD) and 162–191 (QSVY…DLSV). 2 stretches are compositionally biased toward polar residues: residues 32–43 (KDSQFAQDQPQD) and 162–172 (QSVYSYQQMTP). 5 C2H2-type zinc fingers span residues 245-267 (FKCD…RQFH), 280-302 (HSCE…IRTH), 306-328 (CKCP…IRTH), 334-356 (FQCP…QQTH), and 362-385 (YACQ…SSNC).

It belongs to the snail C2H2-type zinc-finger protein family.

The protein resides in the nucleus. Its function is as follows. Essential for the correct specification of ventral-dorsal patterns. This chain is Protein snail (sna), found in Drosophila melanogaster (Fruit fly).